The following is a 156-amino-acid chain: 6,7-dimethyl-8-ribityllumazine synthase (156 aa).

5-amino-6-(D-ribitylamino)uracil contacts are provided by residues Phe23, 57–59, and 81–83; these read AFE and AVI. 86-87 is a (2S)-2-hydroxy-3-oxobutyl phosphate binding site; the sequence is ST. His89 serves as the catalytic Proton donor. Residue Phe114 participates in 5-amino-6-(D-ribitylamino)uracil binding. Arg128 is a (2S)-2-hydroxy-3-oxobutyl phosphate binding site.

This sequence belongs to the DMRL synthase family.

It catalyses the reaction (2S)-2-hydroxy-3-oxobutyl phosphate + 5-amino-6-(D-ribitylamino)uracil = 6,7-dimethyl-8-(1-D-ribityl)lumazine + phosphate + 2 H2O + H(+). The protein operates within cofactor biosynthesis; riboflavin biosynthesis; riboflavin from 2-hydroxy-3-oxobutyl phosphate and 5-amino-6-(D-ribitylamino)uracil: step 1/2. In terms of biological role, catalyzes the formation of 6,7-dimethyl-8-ribityllumazine by condensation of 5-amino-6-(D-ribitylamino)uracil with 3,4-dihydroxy-2-butanone 4-phosphate. This is the penultimate step in the biosynthesis of riboflavin. The polypeptide is 6,7-dimethyl-8-ribityllumazine synthase (Campylobacter fetus subsp. fetus (strain 82-40)).